Reading from the N-terminus, the 277-residue chain is Ribosomal RNA small subunit methyltransferase A (277 aa).

S-adenosyl-L-methionine is bound by residues H15, L17, G42, E64, D89, and N109.

This sequence belongs to the class I-like SAM-binding methyltransferase superfamily. rRNA adenine N(6)-methyltransferase family. RsmA subfamily.

It localises to the cytoplasm. The catalysed reaction is adenosine(1518)/adenosine(1519) in 16S rRNA + 4 S-adenosyl-L-methionine = N(6)-dimethyladenosine(1518)/N(6)-dimethyladenosine(1519) in 16S rRNA + 4 S-adenosyl-L-homocysteine + 4 H(+). Functionally, specifically dimethylates two adjacent adenosines (A1518 and A1519) in the loop of a conserved hairpin near the 3'-end of 16S rRNA in the 30S particle. May play a critical role in biogenesis of 30S subunits. The polypeptide is Ribosomal RNA small subunit methyltransferase A (Synechococcus sp. (strain CC9311)).